The following is a 526-amino-acid chain: Probable feruloyl esterase B-2 (526 aa).

Residues 1–18 form the signal peptide; sequence MTKLSLLPLLALASAVLA. Disulfide bonds link Cys27-Cys74 and Cys62-Cys113. Asn52, Asn97, and Asn137 each carry an N-linked (GlcNAc...) asparagine glycan. Intrachain disulfides connect Cys186–Cys441, Cys255–Cys272, Cys281–Cys291, and Cys503–Cys525. Ser187 acts as the Acyl-ester intermediate in catalysis. Residue Asn233 is glycosylated (N-linked (GlcNAc...) asparagine). 5 residues coordinate Ca(2+): Asp256, Asp259, Ala261, Asp263, and Ile265. Asn311 carries an N-linked (GlcNAc...) asparagine glycan. Residues Asp400 and His440 each act as charge relay system in the active site. The N-linked (GlcNAc...) asparagine glycan is linked to Asn516.

The protein belongs to the tannase family.

It is found in the secreted. The enzyme catalyses feruloyl-polysaccharide + H2O = ferulate + polysaccharide.. In terms of biological role, involved in degradation of plant cell walls. Hydrolyzes the feruloyl-arabinose ester bond in arabinoxylans as well as the feruloyl-galactose and feruloyl-arabinose ester bonds in pectin. This is Probable feruloyl esterase B-2 (faeB-2) from Neosartorya fischeri (strain ATCC 1020 / DSM 3700 / CBS 544.65 / FGSC A1164 / JCM 1740 / NRRL 181 / WB 181) (Aspergillus fischerianus).